The following is a 1703-amino-acid chain: Mediator of RNA polymerase II transcription subunit 14 (1703 aa).

A compositionally biased stretch (polar residues) spans 755-766; it reads LSQTADLATSSA. The tract at residues 755 to 781 is disordered; sequence LSQTADLATSSAGPLLRKDQKPRKRSA.

It belongs to the Mediator complex subunit 14 family. Component of the Mediator complex. Interacts with CDKE-1, HDA19 and LUG. Interacts with PTAC12/HMR/PAP5 and PIF4. In terms of tissue distribution, expressed in roots, stems, developing embryos, young leaf primordia, shoot apical meristems, inflorescence meristems, tapetum in anthers, ovules and floral organ primordia, but not in mature organs.

It localises to the nucleus. Component of the Mediator complex, a coactivator involved in the regulated transcription of nearly all RNA polymerase II-dependent genes. Mediator functions as a bridge to convey information from gene-specific regulatory proteins to the basal RNA polymerase II transcription machinery. The Mediator complex, having a compact conformation in its free form, is recruited to promoters by direct interactions with regulatory proteins and serves for the assembly of a functional pre-initiation complex with RNA polymerase II and the general transcription factors. Binds to G-box (5'-CACGTG-3')-containing regions of target genes promoters (e.g. IAA29 and IAA19). Involved in defining the duration of cell proliferation. Element of a PIF4/HMR/MED14-dependent thermoresponsive process; required for thermomorphogenetic hypocotyl growth in response to daytime warm temperature elicitation by associating to the promoters of thermoresponsive growth-relevant genes (e.g. mainly involved in biosynthesis and signaling of the phytohormone auxin); this also process implies PIF4 and its transcriptional coactivator PTAC12/HMR/PAP5 to promote the expression of target genes. This is Mediator of RNA polymerase II transcription subunit 14 from Arabidopsis thaliana (Mouse-ear cress).